Here is a 76-residue protein sequence, read N- to C-terminus: UPF0248 protein PAE2518 (76 aa).

This sequence belongs to the UPF0248 family.

The chain is UPF0248 protein PAE2518 from Pyrobaculum aerophilum (strain ATCC 51768 / DSM 7523 / JCM 9630 / CIP 104966 / NBRC 100827 / IM2).